A 64-amino-acid chain; its full sequence is Large ribosomal subunit protein bL35 (64 aa).

Residues 1–28 (MPKMKTHSGAKKRFKLTGSGKLKRQQAN) are disordered.

The protein belongs to the bacterial ribosomal protein bL35 family.

The polypeptide is Large ribosomal subunit protein bL35 (Renibacterium salmoninarum (strain ATCC 33209 / DSM 20767 / JCM 11484 / NBRC 15589 / NCIMB 2235)).